The sequence spans 366 residues: Putative F-box protein At3g13624 (366 aa).

Residues 1–51 (MTTISDLPEDVVEEILPRVPLTSLSAVRSICKTWNTLSKNRVLCKAAVKKQ) form the F-box domain.

The sequence is that of Putative F-box protein At3g13624 from Arabidopsis thaliana (Mouse-ear cress).